A 310-amino-acid polypeptide reads, in one-letter code: Homoserine kinase (310 aa).

91–101 (PLARGLGSSAA) lines the ATP pocket.

Belongs to the GHMP kinase family. Homoserine kinase subfamily.

Its subcellular location is the cytoplasm. It carries out the reaction L-homoserine + ATP = O-phospho-L-homoserine + ADP + H(+). Its pathway is amino-acid biosynthesis; L-threonine biosynthesis; L-threonine from L-aspartate: step 4/5. Catalyzes the ATP-dependent phosphorylation of L-homoserine to L-homoserine phosphate. This is Homoserine kinase from Bacillus pumilus (strain SAFR-032).